Here is a 537-residue protein sequence, read N- to C-terminus: MNPSTAQATAVVDELVRGGVREVVLCPGSRNAPLAFALQAADLDGRLRLHMRIDERTAGFLALGLAIAGKRPVPIVMTSGTAVANLGPAVLEANYARVPLVVLSANRPYEMLGTGANQTVEQLGLFGSQVRATISLGLAEDDSTQNSQWRSAVCRVLAAARGTRSGNAGPVHFDIPLREPLVPDVHVHGPVPEGRPGGAAWTTTQNATLDVPVDLDLTADTVVISGHGSALRPELAGLPTVAEPTAPMHGIALHPLALSQLKPKQAIITGRPTLHRQVSKVLADPSVDVYALTTGPRWPDVSGNVLATGTRAVVTGTPDPAWIARCAALTEHAETAVRKQLDAHPKATGLHVAAAVMDALADGDQLLLGASNPVRDAALVSYPKPAVRVLSNRGVAGIDGTVSAAVGAALAYEGGRTVALMGDLTFLHDASGLLIGTGEPRPSDLTIVVANDDGGGIFELLEQGDPQYAGVFERVFGTPHGMDLAALCAAYRVPHAAVTVDALATTLAQPANGIRVLEVATDRSGLRELHASVRAQL.

Belongs to the TPP enzyme family. MenD subfamily. As to quaternary structure, homodimer. Requires Mg(2+) as cofactor. Mn(2+) serves as cofactor. It depends on thiamine diphosphate as a cofactor.

The catalysed reaction is isochorismate + 2-oxoglutarate + H(+) = 5-enolpyruvoyl-6-hydroxy-2-succinyl-cyclohex-3-ene-1-carboxylate + CO2. It functions in the pathway quinol/quinone metabolism; 1,4-dihydroxy-2-naphthoate biosynthesis; 1,4-dihydroxy-2-naphthoate from chorismate: step 2/7. The protein operates within quinol/quinone metabolism; menaquinone biosynthesis. In terms of biological role, catalyzes the thiamine diphosphate-dependent decarboxylation of 2-oxoglutarate and the subsequent addition of the resulting succinic semialdehyde-thiamine pyrophosphate anion to isochorismate to yield 2-succinyl-5-enolpyruvyl-6-hydroxy-3-cyclohexene-1-carboxylate (SEPHCHC). The chain is 2-succinyl-5-enolpyruvyl-6-hydroxy-3-cyclohexene-1-carboxylate synthase from Rhodococcus erythropolis (strain PR4 / NBRC 100887).